The following is a 482-amino-acid chain: tRNA sulfurtransferase (482 aa).

One can recognise a THUMP domain in the interval 61–165 (DVTLAVLTQT…NDKLNLIIAR (105 aa)). ATP contacts are provided by residues 183 to 184 (LI), K265, G287, and Q296. Residues C344 and C456 are joined by a disulfide bond. In terms of domain architecture, Rhodanese spans 404-482 (LGSDVVVLDI…GYKNVKVYRP (79 aa)). Residue C456 is the Cysteine persulfide intermediate of the active site.

This sequence belongs to the ThiI family.

The protein localises to the cytoplasm. It catalyses the reaction [ThiI sulfur-carrier protein]-S-sulfanyl-L-cysteine + a uridine in tRNA + 2 reduced [2Fe-2S]-[ferredoxin] + ATP + H(+) = [ThiI sulfur-carrier protein]-L-cysteine + a 4-thiouridine in tRNA + 2 oxidized [2Fe-2S]-[ferredoxin] + AMP + diphosphate. The enzyme catalyses [ThiS sulfur-carrier protein]-C-terminal Gly-Gly-AMP + S-sulfanyl-L-cysteinyl-[cysteine desulfurase] + AH2 = [ThiS sulfur-carrier protein]-C-terminal-Gly-aminoethanethioate + L-cysteinyl-[cysteine desulfurase] + A + AMP + 2 H(+). It participates in cofactor biosynthesis; thiamine diphosphate biosynthesis. Its function is as follows. Catalyzes the ATP-dependent transfer of a sulfur to tRNA to produce 4-thiouridine in position 8 of tRNAs, which functions as a near-UV photosensor. Also catalyzes the transfer of sulfur to the sulfur carrier protein ThiS, forming ThiS-thiocarboxylate. This is a step in the synthesis of thiazole, in the thiamine biosynthesis pathway. The sulfur is donated as persulfide by IscS. The protein is tRNA sulfurtransferase of Aliivibrio fischeri (strain ATCC 700601 / ES114) (Vibrio fischeri).